The primary structure comprises 186 residues: uncharacterized protein (186 aa).

Positions 121-146 (TSPLLKKNKPSSDQDDTSKQSFDQDE) are disordered.

This sequence belongs to the chlamydial CPn_0422/CT_273/TC_0545 family.

This is an uncharacterized protein from Chlamydia muridarum (strain MoPn / Nigg).